The primary structure comprises 591 residues: Probable lysosomal cobalamin transporter (591 aa).

5 helical membrane passes run 8 to 28 (LIWV…STFV), 39 to 59 (AAVT…VLLI), 95 to 115 (IVYY…IPFT), 144 to 164 (WTLG…FVPF), and 198 to 218 (FLIT…MALL). Residues 238–266 (TASQLETNRERQRQLEGRNEGREGGLDSR) are disordered. Residues 244–266 (TNRERQRQLEGRNEGREGGLDSR) are compositionally biased toward basic and acidic residues. 4 helical membrane passes run 315-335 (LIGG…MLIT), 378-398 (VLFL…IATA), 422-442 (MATV…AMVV), and 509-529 (FFGI…LIVF).

This sequence belongs to the LIMR family. LMBRD1 subfamily.

The protein localises to the lysosome membrane. Functionally, probable lysosomal cobalamin transporter. Required to export cobalamin from lysosomes allowing its conversion to cofactors. The protein is Probable lysosomal cobalamin transporter of Pyrenophora tritici-repentis (strain Pt-1C-BFP) (Wheat tan spot fungus).